The following is a 420-amino-acid chain: ATP phosphoribosyltransferase regulatory subunit (420 aa).

This sequence belongs to the class-II aminoacyl-tRNA synthetase family. HisZ subfamily. In terms of assembly, heteromultimer composed of HisG and HisZ subunits.

The protein localises to the cytoplasm. It functions in the pathway amino-acid biosynthesis; L-histidine biosynthesis; L-histidine from 5-phospho-alpha-D-ribose 1-diphosphate: step 1/9. Its function is as follows. Required for the first step of histidine biosynthesis. May allow the feedback regulation of ATP phosphoribosyltransferase activity by histidine. The sequence is that of ATP phosphoribosyltransferase regulatory subunit from Bacillus thuringiensis (strain Al Hakam).